A 185-amino-acid polypeptide reads, in one-letter code: Large ribosomal subunit protein uL5 (185 aa).

Belongs to the universal ribosomal protein uL5 family. As to quaternary structure, part of the 50S ribosomal subunit; part of the 5S rRNA/L5/L18/L25 subcomplex. Contacts the 5S rRNA and the P site tRNA. Forms a bridge to the 30S subunit in the 70S ribosome.

In terms of biological role, this is one of the proteins that bind and probably mediate the attachment of the 5S RNA into the large ribosomal subunit, where it forms part of the central protuberance. In the 70S ribosome it contacts protein S13 of the 30S subunit (bridge B1b), connecting the 2 subunits; this bridge is implicated in subunit movement. Contacts the P site tRNA; the 5S rRNA and some of its associated proteins might help stabilize positioning of ribosome-bound tRNAs. This is Large ribosomal subunit protein uL5 from Rhodopseudomonas palustris (strain BisB5).